A 310-amino-acid chain; its full sequence is UPF0282 protein PF0593 (310 aa).

It belongs to the UPF0282 family.

The protein is UPF0282 protein PF0593 of Pyrococcus furiosus (strain ATCC 43587 / DSM 3638 / JCM 8422 / Vc1).